The sequence spans 145 residues: 3-dehydroquinate dehydratase (145 aa).

Residue tyrosine 22 is the Proton acceptor of the active site. Substrate is bound by residues asparagine 71, histidine 77, and aspartate 84. Catalysis depends on histidine 97, which acts as the Proton donor. Substrate-binding positions include 98 to 99 (LS) and arginine 108.

It belongs to the type-II 3-dehydroquinase family. Homododecamer.

The enzyme catalyses 3-dehydroquinate = 3-dehydroshikimate + H2O. The protein operates within metabolic intermediate biosynthesis; chorismate biosynthesis; chorismate from D-erythrose 4-phosphate and phosphoenolpyruvate: step 3/7. Catalyzes a trans-dehydration via an enolate intermediate. The sequence is that of 3-dehydroquinate dehydratase from Francisella philomiragia subsp. philomiragia (strain ATCC 25017 / CCUG 19701 / FSC 153 / O#319-036).